The primary structure comprises 378 residues: Glutamate 5-kinase (378 aa).

Lys-20 is an ATP binding site. Substrate is bound by residues Ser-60, Asp-147, and Asn-159. Residues 179–180 (TD) and 221–227 (TGGMLTK) each bind ATP. One can recognise a PUA domain in the interval 286 to 364 (RGRVVLDDGA…SQIARILGSM (79 aa)).

The protein belongs to the glutamate 5-kinase family.

It localises to the cytoplasm. The catalysed reaction is L-glutamate + ATP = L-glutamyl 5-phosphate + ADP. It functions in the pathway amino-acid biosynthesis; L-proline biosynthesis; L-glutamate 5-semialdehyde from L-glutamate: step 1/2. In terms of biological role, catalyzes the transfer of a phosphate group to glutamate to form L-glutamate 5-phosphate. The polypeptide is Glutamate 5-kinase (Bordetella pertussis (strain Tohama I / ATCC BAA-589 / NCTC 13251)).